Here is a 120-residue protein sequence, read N- to C-terminus: Ribonuclease P protein component (120 aa).

The protein belongs to the RnpA family. In terms of assembly, consists of a catalytic RNA component (M1 or rnpB) and a protein subunit.

The enzyme catalyses Endonucleolytic cleavage of RNA, removing 5'-extranucleotides from tRNA precursor.. In terms of biological role, RNaseP catalyzes the removal of the 5'-leader sequence from pre-tRNA to produce the mature 5'-terminus. It can also cleave other RNA substrates such as 4.5S RNA. The protein component plays an auxiliary but essential role in vivo by binding to the 5'-leader sequence and broadening the substrate specificity of the ribozyme. The sequence is that of Ribonuclease P protein component from Blochmanniella floridana.